The chain runs to 891 residues: Probable serine/threonine-protein kinase mkcC (891 aa).

Disordered stretches follow at residues Ile-24–Ile-70, Ala-85–Ser-121, Asp-264–Lys-435, Asn-495–Ser-526, and Thr-565–Asp-588. Low complexity predominate over residues Gln-29–Pro-41. Positions Glu-45–Glu-58 are enriched in basic and acidic residues. 5 stretches are compositionally biased toward low complexity: residues Thr-61–Ile-70, Asn-86–Asn-105, Ser-297–Lys-314, Ser-322–Ser-360, and Thr-379–Ser-397. Positions Arg-422–Ala-432 are enriched in basic residues. The segment covering Asn-495–Ser-522 has biased composition (low complexity). The 249-residue stretch at Tyr-616 to Ile-864 folds into the Protein kinase domain. ATP is bound by residues Ile-622–Val-630 and Lys-645. Asp-735 acts as the Proton acceptor in catalysis.

It belongs to the protein kinase superfamily. STE Ser/Thr protein kinase family. STE20 subfamily. Mg(2+) serves as cofactor.

The enzyme catalyses L-seryl-[protein] + ATP = O-phospho-L-seryl-[protein] + ADP + H(+). It carries out the reaction L-threonyl-[protein] + ATP = O-phospho-L-threonyl-[protein] + ADP + H(+). The protein is Probable serine/threonine-protein kinase mkcC of Dictyostelium discoideum (Social amoeba).